A 492-amino-acid polypeptide reads, in one-letter code: uncharacterized protein (492 aa).

A run of 12 helical transmembrane segments spans residues 16–36 (FIAFVFNYIAGFGFISVVMTM), 39–59 (VGPFSYLVLGLTSFAILGVVL), 107–127 (SFNGVVIPAVLIFSFADIPVV), 133–153 (IIIGLLVGGFLLFGLLTFISL), 162–182 (AIFYFAVIKWIVVIGGFILGI), 210–230 (IIFISLALTIAFAGTEDLASI), 243–263 (FLIAFGCVVLLYLVGFVIISG), 291–311 (LVGGVPLLVIYGLGLLVNSLA), 350–370 (VLISNLMTLLVMLIMVIIPFL), 394–414 (MAAAISLIQYFITFIFFFMIF), 429–449 (VSYVISFALVSVLLFVPLFPF), and 454–474 (VFNTFKIVVLICFYLLGVGFF).

This sequence to M.genitalium MG225.

The protein resides in the cell membrane. This is an uncharacterized protein from Mycoplasma genitalium (strain ATCC 33530 / DSM 19775 / NCTC 10195 / G37) (Mycoplasmoides genitalium).